The following is a 93-amino-acid chain: C-C motif chemokine 17 (93 aa).

The N-terminal stretch at 1-23 (MMSLQMLLLAALLLGTSLQHASA) is a signal peptide. Cystine bridges form between cysteine 33–cysteine 57 and cysteine 34–cysteine 73.

Belongs to the intercrine beta (chemokine CC) family.

The protein resides in the secreted. In terms of biological role, chemokine, which displays chemotactic activity for T lymphocytes, preferentially Th2 cells, but not monocytes or granulocytes. Therefore plays an important role in a wide range of inflammatory and immunological processes. Acts by binding to CCR4 at T-cell surface. Mediates GM-CSF/CSF2-driven pain and inflammation. In the brain, required to maintain the typical, highly branched morphology of hippocampal microglia under homeostatic conditions. May be important for the appropriate adaptation of microglial morphology and synaptic plasticity to acute lipopolysaccharide (LPS)-induced neuroinflammation. Plays a role in wound healing, mainly by inducing fibroblast migration into the wound. The polypeptide is C-C motif chemokine 17 (Ccl17) (Rattus norvegicus (Rat)).